Consider the following 90-residue polypeptide: DNA-binding protein HU-1 (90 aa).

At T4 the chain carries Phosphothreonine.

The protein belongs to the bacterial histone-like protein family. As to quaternary structure, homodimer.

Functionally, histone-like DNA-binding protein which is capable of wrapping DNA to stabilize it, and thus to prevent its denaturation under extreme environmental conditions. This Halalkalibacterium halodurans (strain ATCC BAA-125 / DSM 18197 / FERM 7344 / JCM 9153 / C-125) (Bacillus halodurans) protein is DNA-binding protein HU-1 (hup2).